The chain runs to 535 residues: Bifunctional purine biosynthesis protein PurH (535 aa).

The MGS-like domain maps to 6–151 (TRLPVRRALI…KNHKDVAIVV (146 aa)).

The protein belongs to the PurH family.

It carries out the reaction (6R)-10-formyltetrahydrofolate + 5-amino-1-(5-phospho-beta-D-ribosyl)imidazole-4-carboxamide = 5-formamido-1-(5-phospho-D-ribosyl)imidazole-4-carboxamide + (6S)-5,6,7,8-tetrahydrofolate. The enzyme catalyses IMP + H2O = 5-formamido-1-(5-phospho-D-ribosyl)imidazole-4-carboxamide. It functions in the pathway purine metabolism; IMP biosynthesis via de novo pathway; 5-formamido-1-(5-phospho-D-ribosyl)imidazole-4-carboxamide from 5-amino-1-(5-phospho-D-ribosyl)imidazole-4-carboxamide (10-formyl THF route): step 1/1. Its pathway is purine metabolism; IMP biosynthesis via de novo pathway; IMP from 5-formamido-1-(5-phospho-D-ribosyl)imidazole-4-carboxamide: step 1/1. The protein is Bifunctional purine biosynthesis protein PurH of Pseudomonas putida (strain GB-1).